Here is a 469-residue protein sequence, read N- to C-terminus: Ubiquitin carboxyl-terminal hydrolase MINDY-1 (469 aa).

Residues 1–105 form a disordered region; that stretch reads MEHHQPEHPA…RLQELPQSPR (105 aa). Residues 23-44 show a composition bias toward basic and acidic residues; the sequence is ENHKVLSEPKEHPQDKDAKEAD. Residue Ser-103 is modified to Phosphoserine. Cys-137 functions as the Nucleophile in the catalytic mechanism. The Proton acceptor role is filled by His-319. Positions 388–428 are ubiquitin-binding domain (UBD); it reads QVDQDYLIALSLQQQQPPPQGTSGLSDLELAQQLQQEEYQQ. A disordered region spans residues 401-469; the sequence is QQQPPPQGTS…PKQESDCVLL (69 aa). The span at 415-448 shows a compositional bias: low complexity; that stretch reads LELAQQLQQEEYQQHQAAQAAPARAPSPQGRGAA. A Phosphoserine modification is found at Ser-441. Basic and acidic residues predominate over residues 453–469; it reads AAERRQRPKQESDCVLL.

It belongs to the MINDY deubiquitinase family. FAM63 subfamily.

It carries out the reaction Thiol-dependent hydrolysis of ester, thioester, amide, peptide and isopeptide bonds formed by the C-terminal Gly of ubiquitin (a 76-residue protein attached to proteins as an intracellular targeting signal).. In terms of biological role, hydrolase that can specifically remove 'Lys-48'-linked conjugated ubiquitin from proteins. Has exodeubiquitinase activity and has a preference for long polyubiquitin chains. May play a regulatory role at the level of protein turnover. This is Ubiquitin carboxyl-terminal hydrolase MINDY-1 (MINDY1) from Bos taurus (Bovine).